Reading from the N-terminus, the 152-residue chain is Deoxyuridine 5'-triphosphate nucleotidohydrolase (152 aa).

Residues 71–73, N84, 88–90, and M98 each bind substrate; these read RSG and LID.

The protein belongs to the dUTPase family. It depends on Mg(2+) as a cofactor.

The catalysed reaction is dUTP + H2O = dUMP + diphosphate + H(+). It participates in pyrimidine metabolism; dUMP biosynthesis; dUMP from dCTP (dUTP route): step 2/2. Functionally, this enzyme is involved in nucleotide metabolism: it produces dUMP, the immediate precursor of thymidine nucleotides and it decreases the intracellular concentration of dUTP so that uracil cannot be incorporated into DNA. The chain is Deoxyuridine 5'-triphosphate nucleotidohydrolase from Shewanella denitrificans (strain OS217 / ATCC BAA-1090 / DSM 15013).